A 324-amino-acid polypeptide reads, in one-letter code: GTP cyclohydrolase 1 (324 aa).

Disordered regions lie at residues 33–59 and 79–119; these read GRNNSVCSTSSTSGTSSLADRQQNQAE and VPLA…TPGH. The span at 40–49 shows a compositional bias: low complexity; sequence STSSTSGTSS. Polar residues-rich tracts occupy residues 50 to 59 and 93 to 117; these read LADRQQNQAE and TNGSSPDSDGTQPKTPLTPRTSTTP. Cysteine 214, histidine 217, and cysteine 285 together coordinate Zn(2+).

Belongs to the GTP cyclohydrolase I family. In terms of assembly, toroid-shaped homodecamer, composed of two pentamers of five dimers. Isoform B is expressed almost exclusively in adult heads.

It catalyses the reaction GTP + H2O = 7,8-dihydroneopterin 3'-triphosphate + formate + H(+). It participates in cofactor biosynthesis; 7,8-dihydroneopterin triphosphate biosynthesis; 7,8-dihydroneopterin triphosphate from GTP: step 1/1. Functionally, isoform B is required for eye pigment production, Isoform C may be required for normal embryonic development and segment pattern formation. This is GTP cyclohydrolase 1 (Pu) from Drosophila melanogaster (Fruit fly).